The chain runs to 63 residues: Bowman-birk type proteinase inhibitor (63 aa).

Disulfide bonds link C7-C61, C8-C23, C11-C57, C13-C21, C31-C38, C35-C50, and C40-C48.

Its function is as follows. Inhibits trypsin, chymotrypsin, plasmin and factor XIIa. Does not inhibit factor Xa, thrombin and plasma kallikrein. This is Bowman-birk type proteinase inhibitor from Amburana acreana (Cerejeira).